The following is a 196-amino-acid chain: Xanthine phosphoribosyltransferase (196 aa).

Xanthine is bound by residues Leu26 and Asn33. 134-138 (ASGEA) contacts 5-phospho-alpha-D-ribose 1-diphosphate. Lys162 is a xanthine binding site.

The protein belongs to the purine/pyrimidine phosphoribosyltransferase family. Xpt subfamily. Homodimer.

Its subcellular location is the cytoplasm. The enzyme catalyses XMP + diphosphate = xanthine + 5-phospho-alpha-D-ribose 1-diphosphate. It functions in the pathway purine metabolism; XMP biosynthesis via salvage pathway; XMP from xanthine: step 1/1. Its function is as follows. Converts the preformed base xanthine, a product of nucleic acid breakdown, to xanthosine 5'-monophosphate (XMP), so it can be reused for RNA or DNA synthesis. The protein is Xanthine phosphoribosyltransferase of Moorella thermoacetica (strain ATCC 39073 / JCM 9320).